Here is a 146-residue protein sequence, read N- to C-terminus: Large ribosomal subunit protein uL15 (146 aa).

Residues 1 to 56 (MRLHDLRPVPGSRQKPTRKGQGIGSGLGKTAGRGQKGQKARSGGGVRPGFEGGQMP) form a disordered region. 2 stretches are compositionally biased toward gly residues: residues 21–35 (QGIG…GRGQ) and 42–52 (SGGGVRPGFEG).

The protein belongs to the universal ribosomal protein uL15 family. Part of the 50S ribosomal subunit.

Its function is as follows. Binds to the 23S rRNA. The polypeptide is Large ribosomal subunit protein uL15 (Carboxydothermus hydrogenoformans (strain ATCC BAA-161 / DSM 6008 / Z-2901)).